The chain runs to 388 residues: Formate-dependent phosphoribosylglycinamide formyltransferase (388 aa).

N(1)-(5-phospho-beta-D-ribosyl)glycinamide is bound by residues 15–16 and Glu75; that span reads EL. Residues Arg107, Lys148, 153 to 158, 188 to 191, and Glu196 each bind ATP; these read SSGKGQ and EEFL. Residues 112 to 302 form the ATP-grasp domain; sequence DLAAGELALR…EFELHLRAVL (191 aa). Residues Glu261 and Glu273 each contribute to the Mg(2+) site. Residues Asp280, Lys350, and 357–358 contribute to the N(1)-(5-phospho-beta-D-ribosyl)glycinamide site; that span reads RR.

Belongs to the PurK/PurT family. In terms of assembly, homodimer.

It catalyses the reaction N(1)-(5-phospho-beta-D-ribosyl)glycinamide + formate + ATP = N(2)-formyl-N(1)-(5-phospho-beta-D-ribosyl)glycinamide + ADP + phosphate + H(+). The protein operates within purine metabolism; IMP biosynthesis via de novo pathway; N(2)-formyl-N(1)-(5-phospho-D-ribosyl)glycinamide from N(1)-(5-phospho-D-ribosyl)glycinamide (formate route): step 1/1. Involved in the de novo purine biosynthesis. Catalyzes the transfer of formate to 5-phospho-ribosyl-glycinamide (GAR), producing 5-phospho-ribosyl-N-formylglycinamide (FGAR). Formate is provided by PurU via hydrolysis of 10-formyl-tetrahydrofolate. The polypeptide is Formate-dependent phosphoribosylglycinamide formyltransferase (Parasynechococcus marenigrum (strain WH8102)).